The sequence spans 157 residues: Small ribosomal subunit protein uS7 (157 aa).

Belongs to the universal ribosomal protein uS7 family. In terms of assembly, part of the 30S ribosomal subunit. Contacts proteins S9 and S11.

Its function is as follows. One of the primary rRNA binding proteins, it binds directly to 16S rRNA where it nucleates assembly of the head domain of the 30S subunit. Is located at the subunit interface close to the decoding center, probably blocks exit of the E-site tRNA. The protein is Small ribosomal subunit protein uS7 of Leptospira biflexa serovar Patoc (strain Patoc 1 / Ames).